A 66-amino-acid chain; its full sequence is Ocellatin-PT5 (66 aa).

The signal sequence occupies residues 1–22 (MAFLKKSLFLVLFLGLVSLSIC). Positions 23 to 39 (DEEKRQDEDDDDDDDEE) are excised as a propeptide. Val66 is modified (valine amide).

In terms of tissue distribution, expressed by the skin glands.

It localises to the secreted. Its function is as follows. Has antibacterial activity against Gram-negative bacterium E.coli ATCC 25922 (MIC=300 uM) but not against S.pneumoniae ATCC 700603, S.choleraesuis ATCC 14028 or Gram-positive bacterium S.aureus ATCC 29313. Shows very little hemolytic activity and no cytotoxicity. The sequence is that of Ocellatin-PT5 from Leptodactylus pustulatus (Ceara white-lipped frog).